We begin with the raw amino-acid sequence, 507 residues long: MFEVPITLTNRKFAQRRKLKYQYINYISRRFDRISKKSTTTDSLPTPENSAAENNDEEEGQNSEAGTYRRSVLQQKKRRRERHWRSVVGEIYSTTESETDSQEEETEEGGEHDTGIDKEDSDEERKFWKKYEKPEKSFEIWRTVSSQNKQPINKQKMTYHNFKKIEKIPLRKMEIPLLHCTKENKLYFQSISRGLEPLKTSTSEVRNYRTRHIVTLTDLLHLNVSRHNWSLAYKIFATLIRIPGVQIKSLWGIGVEILDNLSNSSSGLDFLQWMCQIYSSKSRFVQNINYRSIVPPFQTGSRTHTAKFAITYLWSSLINCQKSMEPSSNIIDKPFDTENDLLQELIDKISEWVLTPPFMEDAEVWFIYASCHLLKADTLSRQFVNDNKNNDLIGLDRDIKINQVIKHIHYVRTFLKICLDKGGFAVPSRLIENQLKSFESRLYGEAQDIQERDVANVYDSIDNSSVENSFGDVYETNAEFLDTQLMDLSPEDNGLDEMHYSDEDSSE.

Residues 37–47 (KSTTTDSLPTP) are compositionally biased toward polar residues. Disordered regions lie at residues 37–76 (KSTT…LQQK) and 89–124 (GEIY…SDEE). Positions 97-108 (SETDSQEEETEE) are enriched in acidic residues. Over residues 109–124 (GGEHDTGIDKEDSDEE) the composition is skewed to basic and acidic residues.

In terms of assembly, component of the core factor (CF) complex, which consists of RRN6, RRN7 and RRN11. The CF heterotrimer may further dimerize to form a hexamer. RRN11 interacts with RRN6, RRN7 and SPT15.

It is found in the nucleus. Its subcellular location is the nucleolus. In terms of biological role, acts as a component of the core factor (CF) complex which is essential for the initiation of rDNA transcription by RNA polymerase I. After binding of UAF (upstream activation factor) to an upstream element of the promoter, CF is recruited in a SPT15/TBP-dependent manner to form a preinitiation complex. The polypeptide is RNA polymerase I-specific transcription initiation factor RRN11 (RRN11) (Saccharomyces cerevisiae (strain ATCC 204508 / S288c) (Baker's yeast)).